The following is a 457-amino-acid chain: Trigger factor (457 aa).

In terms of domain architecture, PPIase FKBP-type spans 162–243 (GDFVSIDLSA…VQTVKERELP (82 aa)). The segment at 434-457 (AELFGSSEDETEADASDSAESEDK) is disordered. Residues 440-457 (SEDETEADASDSAESEDK) show a composition bias toward acidic residues.

The protein belongs to the FKBP-type PPIase family. Tig subfamily.

It localises to the cytoplasm. It catalyses the reaction [protein]-peptidylproline (omega=180) = [protein]-peptidylproline (omega=0). In terms of biological role, involved in protein export. Acts as a chaperone by maintaining the newly synthesized protein in an open conformation. Functions as a peptidyl-prolyl cis-trans isomerase. This is Trigger factor from Rhodococcus erythropolis (strain PR4 / NBRC 100887).